The primary structure comprises 378 residues: 3-dehydroquinate synthase (378 aa).

NAD(+)-binding positions include 115–119, 139–140, Lys-152, and Lys-161; these read GVVGD and TS. 3 residues coordinate Zn(2+): Glu-194, His-256, and His-275.

It belongs to the sugar phosphate cyclases superfamily. Dehydroquinate synthase family. The cofactor is Co(2+). Zn(2+) is required as a cofactor. It depends on NAD(+) as a cofactor.

It is found in the cytoplasm. It catalyses the reaction 7-phospho-2-dehydro-3-deoxy-D-arabino-heptonate = 3-dehydroquinate + phosphate. It functions in the pathway metabolic intermediate biosynthesis; chorismate biosynthesis; chorismate from D-erythrose 4-phosphate and phosphoenolpyruvate: step 2/7. Functionally, catalyzes the conversion of 3-deoxy-D-arabino-heptulosonate 7-phosphate (DAHP) to dehydroquinate (DHQ). The protein is 3-dehydroquinate synthase of Brucella anthropi (strain ATCC 49188 / DSM 6882 / CCUG 24695 / JCM 21032 / LMG 3331 / NBRC 15819 / NCTC 12168 / Alc 37) (Ochrobactrum anthropi).